We begin with the raw amino-acid sequence, 76 residues long: Small ribosomal subunit protein bS16c (76 aa).

The protein belongs to the bacterial ribosomal protein bS16 family.

It localises to the plastid. The protein resides in the chloroplast. The chain is Small ribosomal subunit protein bS16c from Guillardia theta (Cryptophyte).